The following is a 183-amino-acid chain: Nucleoside triphosphate pyrophosphatase (183 aa).

Residue Asp71 is the Proton acceptor of the active site.

It belongs to the Maf family. Requires a divalent metal cation as cofactor.

Its subcellular location is the cytoplasm. It carries out the reaction a ribonucleoside 5'-triphosphate + H2O = a ribonucleoside 5'-phosphate + diphosphate + H(+). The catalysed reaction is a 2'-deoxyribonucleoside 5'-triphosphate + H2O = a 2'-deoxyribonucleoside 5'-phosphate + diphosphate + H(+). Nucleoside triphosphate pyrophosphatase. May have a dual role in cell division arrest and in preventing the incorporation of modified nucleotides into cellular nucleic acids. This chain is Nucleoside triphosphate pyrophosphatase, found in Campylobacter jejuni subsp. doylei (strain ATCC BAA-1458 / RM4099 / 269.97).